The primary structure comprises 301 residues: MHKKNRHNQGYNFTALVKAHPGLLQFIIKNQYNNQDTIDFANPQAVKALNLSLLKSEYHVKFWDIPDGYLCPAIPGRVDYIHHLQDLLAATPKTLLPNKTPINVLDIGTGASCIYPILGQREYDWHFVASDVDPISIKVAKHIISSDKSLNRNINCRLQPNSNQIFNGIIAEDEFYHLTICNPPFHSSLAEASKGTARKIKNLNKGNHSSKNQDKTLNFGGQKAELWCPGGELAFIGKMIKESKAYQKQVLWFTCLVSKKDHLSKLKLSLKKSDAKQIKVIDMAQGQKISRFIAWSFYDVN.

The protein belongs to the methyltransferase superfamily. METTL16/RlmF family.

It is found in the cytoplasm. It catalyses the reaction adenosine(1618) in 23S rRNA + S-adenosyl-L-methionine = N(6)-methyladenosine(1618) in 23S rRNA + S-adenosyl-L-homocysteine + H(+). Its function is as follows. Specifically methylates the adenine in position 1618 of 23S rRNA. The sequence is that of Ribosomal RNA large subunit methyltransferase F from Colwellia psychrerythraea (strain 34H / ATCC BAA-681) (Vibrio psychroerythus).